The chain runs to 424 residues: Magnesium-chelatase subunit ChlI-1, chloroplastic (424 aa).

The N-terminal 60 residues, 1 to 60, are a transit peptide targeting the chloroplast; that stretch reads MASLLGTSSSAIWASPSLSSPSSKPSSSPICFRPGKLFGSKLNAGIQIRPKKNRSRYHVS. Val-61 carries the N-acetylvaline modification. 2 disulfide bridges follow: Cys-102–Cys-193 and Cys-354–Cys-396. 119–126 contacts ATP; it reads GDRGTGKS. Phosphoserine is present on Ser-355.

It belongs to the Mg-chelatase subunits D/I family. In terms of assembly, the magnesium chelatase complex is a heterotrimer consisting of subunits CHLI, CHLD and CHLH. Interacts with CHLH and CHLD.

It localises to the plastid. The protein localises to the chloroplast. It carries out the reaction protoporphyrin IX + Mg(2+) + ATP + H2O = Mg-protoporphyrin IX + ADP + phosphate + 3 H(+). Its pathway is porphyrin-containing compound metabolism; chlorophyll biosynthesis. Its activity is regulated as follows. Redox regulation; active in reducing conditions, inactive in oxidizing conditions. Thioredoxins f and m mediate the reversible reductive activation of oxidized CHLI1. Its function is as follows. Involved in chlorophyll biosynthesis. Catalyzes the insertion of magnesium ion into protoporphyrin IX to yield Mg-protoporphyrin IX. The magnesium-chelatase is a complex of three subunits, CHLI, CHLD and CHLH. The reaction takes place in two steps, with an ATP-dependent activation followed by an ATP-dependent chelation step. Possesses high affinity for ATP and may play a major role in chlorophyll biosynthesis. Does not bind abscisic acid (ABA), but is a positive regulator of ABA signaling. May be involved in ABA signaling in the control of stomatal aperture, but does not seem to have an effect on ABA-induced gene expression. The chain is Magnesium-chelatase subunit ChlI-1, chloroplastic (CHLI1) from Arabidopsis thaliana (Mouse-ear cress).